The primary structure comprises 146 residues: MNFEAISLEMSLMWLHKNNKLMGFLNQEAPEVNIFDQFLFEDRDKKMLKEDDEFCDPPAQTFNEPAPSTSKITDVDIEFYNSMAEEFDSPMDEEEETKPREASLDQTAPKKSKKEELLVKNNNFSTNNVKKLQFKKSVRLRSKRRS.

The segment covering 86–96 (EFDSPMDEEEE) has biased composition (acidic residues). The disordered stretch occupies residues 86–124 (EFDSPMDEEEETKPREASLDQTAPKKSKKEELLVKNNNF).

This is an uncharacterized protein from Ostreid herpesvirus 1 (isolate France) (OsHV-1).